The primary structure comprises 425 residues: Monoacylglycerol lipase ABHD2 (425 aa).

Residues 1–9 are Cytoplasmic-facing; sequence MNAMLETPE. A helical; Signal-anchor for type II membrane protein transmembrane segment spans residues 10–30; sequence LPAVFDGVKLAAVAAVLYVIV. At 31-425 the chain is on the extracellular side; that stretch reads RCLNLKSPTA…DTEQMEAELE (395 aa). The AB hydrolase-1 domain maps to 128–382; sequence MVICPGIANH…HGGHLGFFEG (255 aa). An N-linked (GlcNAc...) asparagine glycan is attached at asparagine 136. The active-site Nucleophile is the serine 207. Catalysis depends on charge relay system residues aspartate 345 and histidine 376. A glycan (N-linked (GlcNAc...) asparagine) is linked at asparagine 410.

This sequence belongs to the AB hydrolase superfamily. AB hydrolase 4 family. As to expression, widely expressed with higher expression in testis. Expressed by vascular smooth muscle cells, non vascular smooth muscle cells and heart.

The protein localises to the cell membrane. It is found in the cytoplasmic vesicle. It localises to the secretory vesicle. Its subcellular location is the acrosome membrane. The enzyme catalyses Hydrolyzes glycerol monoesters of long-chain fatty acids.. The catalysed reaction is an acetyl ester + H2O = an aliphatic alcohol + acetate + H(+). It carries out the reaction a triacylglycerol + H2O = a diacylglycerol + a fatty acid + H(+). It catalyses the reaction 2-(5Z,8Z,11Z,14Z-eicosatetraenoyl)-glycerol + H2O = glycerol + (5Z,8Z,11Z,14Z)-eicosatetraenoate + H(+). The enzyme catalyses a butanoate ester + H2O = an aliphatic alcohol + butanoate + H(+). The catalysed reaction is hexadecanoate ester + H2O = an aliphatic alcohol + hexadecanoate + H(+). With respect to regulation, acylglycerol lipase activity is activated upon binding to progesterone. Its function is as follows. Progesterone-dependent acylglycerol lipase that catalyzes hydrolysis of endocannabinoid arachidonoylglycerol (AG) from cell membrane. Acts as a progesterone receptor: progesterone-binding activates the acylglycerol lipase activity, mediating degradation of 1-arachidonoylglycerol (1AG) and 2-arachidonoylglycerol (2AG) to glycerol and arachidonic acid (AA). Also displays an ester hydrolase activity against acetyl ester, butanoate ester and hexadecanoate ester. Plays a key role in sperm capacitation in response to progesterone by mediating degradation of 2AG, an inhibitor of the sperm calcium channel CatSper, leading to calcium influx via CatSper and sperm activation. Involved in acrosomal reaction. May also play a role in smooth muscle cells migration. The sequence is that of Monoacylglycerol lipase ABHD2 (Abhd2) from Mus musculus (Mouse).